The primary structure comprises 194 residues: MRQAKIERNTFETKIKLSLNLDTQEPVDIQTGVGFFDHMLTLFARHGRMSLVVKADGDLHVDSHHTVEDVGIALGQALRQALGDKVGINRYGTSFVPMDETLGMASLDLSGRSYLVFDAEFDNPKLGNFDTELVEEFFQALAFNVQMNLHLKILHGKNNHHKAESLFKATGRALREAVTINPEIKGVNSTKGML.

The protein belongs to the imidazoleglycerol-phosphate dehydratase family.

It is found in the cytoplasm. The enzyme catalyses D-erythro-1-(imidazol-4-yl)glycerol 3-phosphate = 3-(imidazol-4-yl)-2-oxopropyl phosphate + H2O. It functions in the pathway amino-acid biosynthesis; L-histidine biosynthesis; L-histidine from 5-phospho-alpha-D-ribose 1-diphosphate: step 6/9. This Streptococcus mutans serotype c (strain ATCC 700610 / UA159) protein is Imidazoleglycerol-phosphate dehydratase.